The following is a 364-amino-acid chain: MKMEMHQIWSRIALASFAFAILFVSVSADDVVVLTEENFEKEVGHDKGALVEFYAPWCGHCKKLAPEYEKLPNSFKKAKSVLIAKVDCDEHKSVCSKYGVSGYPTIQWFPKGSLEPKKFEGPRTAESLAEFVNTEGGTNVKIATAPSHVVVLTPETFNEVVLDGTKDVLVEFYAPWCGHCKSLAPIYEKVAAVFKSEDDVVIANLDADKYRDLAEKYDVSGFPTLKFFPKGNKAGEDYGGGRDLDDFVAFINEKSGTSRDAKGQLTSEAGIVEDLDELVKEFVAANDEEKKAVFARIEEEVKKLEGSASRYGKIYLKVSKKYLEKGSDYAKNEIQRLERLLEKSISPAKADELTLKKNILSTYA.

An N-terminal signal peptide occupies residues 1–28 (MKMEMHQIWSRIALASFAFAILFVSVSA). 2 consecutive Thioredoxin domains span residues 29–137 (DDVV…TEGG) and 139–256 (NVKI…EKSG). Catalysis depends on nucleophile residues cysteine 58, cysteine 61, cysteine 177, and cysteine 180. 2 disulfide bridges follow: cysteine 58–cysteine 61 and cysteine 177–cysteine 180.

This sequence belongs to the protein disulfide isomerase family.

The protein localises to the endoplasmic reticulum lumen. The enzyme catalyses Catalyzes the rearrangement of -S-S- bonds in proteins.. The sequence is that of Probable protein disulfide-isomerase A6 from Medicago sativa (Alfalfa).